A 166-amino-acid chain; its full sequence is Putative 4-hydroxy-4-methyl-2-oxoglutarate aldolase (166 aa).

Substrate is bound by residues 74–77 (GDQI) and arginine 96. Residue aspartate 97 coordinates a divalent metal cation.

This sequence belongs to the class II aldolase/RraA-like family. In terms of assembly, homotrimer. A divalent metal cation serves as cofactor.

The enzyme catalyses 4-hydroxy-4-methyl-2-oxoglutarate = 2 pyruvate. It catalyses the reaction oxaloacetate + H(+) = pyruvate + CO2. Functionally, catalyzes the aldol cleavage of 4-hydroxy-4-methyl-2-oxoglutarate (HMG) into 2 molecules of pyruvate. Also contains a secondary oxaloacetate (OAA) decarboxylase activity due to the common pyruvate enolate transition state formed following C-C bond cleavage in the retro-aldol and decarboxylation reactions. The polypeptide is Putative 4-hydroxy-4-methyl-2-oxoglutarate aldolase (Xanthomonas oryzae pv. oryzae (strain MAFF 311018)).